Reading from the N-terminus, the 293-residue chain is Elongation factor Ts (293 aa).

The involved in Mg(2+) ion dislocation from EF-Tu stretch occupies residues 80 to 83 (TDFV).

It belongs to the EF-Ts family.

It localises to the cytoplasm. Functionally, associates with the EF-Tu.GDP complex and induces the exchange of GDP to GTP. It remains bound to the aminoacyl-tRNA.EF-Tu.GTP complex up to the GTP hydrolysis stage on the ribosome. The chain is Elongation factor Ts from Burkholderia lata (strain ATCC 17760 / DSM 23089 / LMG 22485 / NCIMB 9086 / R18194 / 383).